The primary structure comprises 499 residues: Serine carboxypeptidase-like 34 (499 aa).

Residues Met1–Ala25 form the signal peptide. N-linked (GlcNAc...) asparagine glycans are attached at residues Asn73, Asn124, and Asn158. Disulfide bonds link Cys106–Cys383, Cys269–Cys280, and Cys304–Cys351. The active site involves Ser200. Asn310, Asn372, and Asn375 each carry an N-linked (GlcNAc...) asparagine glycan. Residues Asp419 and His471 contribute to the active site.

Belongs to the peptidase S10 family. Ubiquitous.

It is found in the secreted. In terms of biological role, probable carboxypeptidase. This is Serine carboxypeptidase-like 34 (SCPL34) from Arabidopsis thaliana (Mouse-ear cress).